Here is a 31-residue protein sequence, read N- to C-terminus: MEAFTYTLLMTLGVVTLFFAVAFRDPPKFDK.

The chain crosses the membrane as a helical span at residues Ala-3–Phe-23.

This sequence belongs to the PsbT family. In terms of assembly, PSII is composed of 1 copy each of membrane proteins PsbA, PsbB, PsbC, PsbD, PsbE, PsbF, PsbH, PsbI, PsbJ, PsbK, PsbL, PsbM, PsbT, PsbX, PsbY, Psb30/Ycf12, peripheral proteins PsbO, CyanoQ (PsbQ), PsbU, PsbV and a large number of cofactors. It forms dimeric complexes.

The protein localises to the cellular thylakoid membrane. Its function is as follows. Found at the monomer-monomer interface of the photosystem II (PS II) dimer, plays a role in assembly and dimerization of PSII. PSII is a light-driven water plastoquinone oxidoreductase, using light energy to abstract electrons from H(2)O, generating a proton gradient subsequently used for ATP formation. The polypeptide is Photosystem II reaction center protein T (Prochlorococcus marinus (strain SARG / CCMP1375 / SS120)).